Here is a 98-residue protein sequence, read N- to C-terminus: Large ribosomal subunit protein mL53 (98 aa).

The protein belongs to the mitochondrion-specific ribosomal protein mL53 family. As to quaternary structure, component of the mitochondrial large ribosomal subunit (mt-LSU). Mature yeast 74S mitochondrial ribosomes consist of a small (37S) and a large (54S) subunit. The 37S small subunit contains a 15S ribosomal RNA (15S mt-rRNA) and 34 different proteins. The 54S large subunit contains a 21S rRNA (21S mt-rRNA) and 46 different proteins.

The protein localises to the mitochondrion. In terms of biological role, component of the mitochondrial ribosome (mitoribosome), a dedicated translation machinery responsible for the synthesis of mitochondrial genome-encoded proteins, including at least some of the essential transmembrane subunits of the mitochondrial respiratory chain. The mitoribosomes are attached to the mitochondrial inner membrane and translation products are cotranslationally integrated into the membrane. This Saccharomyces cerevisiae (strain ATCC 204508 / S288c) (Baker's yeast) protein is Large ribosomal subunit protein mL53 (MRPL44).